A 53-amino-acid chain; its full sequence is RVLFRSGDQPADQPAERMQDISPEQNPLFHPDKRRCCPMPGCFAGPFCPCCPP.

Positions 1 to 34 are excised as a propeptide; the sequence is RVLFRSGDQPADQPAERMQDISPEQNPLFHPDKR. Disulfide bonds link cysteine 36/cysteine 50, cysteine 37/cysteine 48, and cysteine 42/cysteine 51.

This sequence belongs to the conotoxin M superfamily. In terms of tissue distribution, expressed by the venom duct.

The protein localises to the secreted. In Conus regius (Crown cone), this protein is Reg12l.